A 229-amino-acid polypeptide reads, in one-letter code: Deleted in azoospermia-like (229 aa).

Positions N47–R128 constitute an RRM domain. The DAZ domain occupies P172–Q198.

The protein belongs to the RRM DAZ family. In terms of tissue distribution, testis and ovary specific. In ovary, it is localized in the cortex of oocytes. At the onset of embryogenesis, maternal product is located at the vegetal pole, before migrating toward blastomeres through cytoplasmic streams as early embryogenesis proceededs.

It localises to the cytoplasm. In terms of biological role, RNA-binding protein involved in gametogenesis in both males and females. Acts by binding to the 3'-UTR of mRNA, specifically recognizing GUU triplets, and promoting the translation of key transcripts. Establishes oocyte polarity through interaction with Bucky ball (BUC). Interacts with Bucky ball (BUC) mRNA to mediate Balbiani body formation and oocyte polarity during early oogenesis. This chain is Deleted in azoospermia-like (dazl), found in Danio rerio (Zebrafish).